Here is a 498-residue protein sequence, read N- to C-terminus: Probable malate:quinone oxidoreductase (498 aa).

It belongs to the MQO family. It depends on FAD as a cofactor.

It catalyses the reaction (S)-malate + a quinone = a quinol + oxaloacetate. It participates in carbohydrate metabolism; tricarboxylic acid cycle; oxaloacetate from (S)-malate (quinone route): step 1/1. The sequence is that of Probable malate:quinone oxidoreductase from Prochlorococcus marinus (strain MIT 9301).